Here is a 243-residue protein sequence, read N- to C-terminus: MRTRVIVNGANGKMGILACETLENHEQFEVVAKLSRQDNLGQSILDTKAQIVVDLTRADCVYENSLTIINHGARPVIGTSGLVETQINELTKLCEIKQIGGIIAPNFSLGAILMMMLATKASEYFSEVEIIEGHHQQKLDAPSGTALKTAEMIAAARKKPKNKLPLKELTPGARGGSHHDINIHSLRLPGLLARQEVLFGNIGETLSITHNSIDRRCFMPGIVLACQKVLNLTNLVYGLEHLL.

NAD(+)-binding positions include 9–14 (GANGKM), 78–80 (GTS), and 104–107 (APNF). The Proton donor/acceptor role is filled by H134. A (S)-2,3,4,5-tetrahydrodipicolinate-binding site is contributed by H135. The active-site Proton donor is K138. 144–145 (GT) provides a ligand contact to (S)-2,3,4,5-tetrahydrodipicolinate.

It belongs to the DapB family.

The protein resides in the cytoplasm. The enzyme catalyses (S)-2,3,4,5-tetrahydrodipicolinate + NAD(+) + H2O = (2S,4S)-4-hydroxy-2,3,4,5-tetrahydrodipicolinate + NADH + H(+). It carries out the reaction (S)-2,3,4,5-tetrahydrodipicolinate + NADP(+) + H2O = (2S,4S)-4-hydroxy-2,3,4,5-tetrahydrodipicolinate + NADPH + H(+). The protein operates within amino-acid biosynthesis; L-lysine biosynthesis via DAP pathway; (S)-tetrahydrodipicolinate from L-aspartate: step 4/4. Its function is as follows. Catalyzes the conversion of 4-hydroxy-tetrahydrodipicolinate (HTPA) to tetrahydrodipicolinate. This Legionella pneumophila (strain Paris) protein is 4-hydroxy-tetrahydrodipicolinate reductase.